An 87-amino-acid polypeptide reads, in one-letter code: Translation initiation factor IF-1 2 (87 aa).

One can recognise an S1-like domain in the interval 1–72 (MAKEELIELN…TKGRINFRHK (72 aa)). A disordered region spans residues 66 to 87 (RINFRHKDERSGPPSRPPQHRR).

Belongs to the IF-1 family. In terms of assembly, component of the 30S ribosomal translation pre-initiation complex which assembles on the 30S ribosome in the order IF-2 and IF-3, IF-1 and N-formylmethionyl-tRNA(fMet); mRNA recruitment can occur at any time during PIC assembly.

It localises to the cytoplasm. One of the essential components for the initiation of protein synthesis. Stabilizes the binding of IF-2 and IF-3 on the 30S subunit to which N-formylmethionyl-tRNA(fMet) subsequently binds. Helps modulate mRNA selection, yielding the 30S pre-initiation complex (PIC). Upon addition of the 50S ribosomal subunit IF-1, IF-2 and IF-3 are released leaving the mature 70S translation initiation complex. In Bordetella parapertussis (strain 12822 / ATCC BAA-587 / NCTC 13253), this protein is Translation initiation factor IF-1 2.